Reading from the N-terminus, the 168-residue chain is Endoribonuclease YbeY (168 aa).

3 residues coordinate Zn(2+): His119, His123, and His129.

This sequence belongs to the endoribonuclease YbeY family. The cofactor is Zn(2+).

Its subcellular location is the cytoplasm. Single strand-specific metallo-endoribonuclease involved in late-stage 70S ribosome quality control and in maturation of the 3' terminus of the 16S rRNA. This chain is Endoribonuclease YbeY, found in Gluconobacter oxydans (strain 621H) (Gluconobacter suboxydans).